Consider the following 808-residue polypeptide: Beta-catenin/armadillo-related protein 1 (808 aa).

The segment at 1–85 is involved in transcriptional activation; that stretch reads MDLDPNLVIN…SSHLSGMSSM (85 aa). ARM repeat units follow at residues 118–160, 165–209, and 369–408; these read RAIP…NETK, CVIF…RAIS, and SDVPSKMKEELLLKSLLELVNSRNAVIRLYSAQTMSNLVA. Positions 541–808 are involved in transcriptional activation; sequence NVQDVIEGVR…DQYPYRQGRF (268 aa). Positions 702–808 are disordered; the sequence is TYEGAGEQWS…DQYPYRQGRF (107 aa). The segment covering 723 to 736 has biased composition (polar residues); sequence YCNSSGRDSSKTYN. A compositionally biased stretch (low complexity) spans 737 to 750; that stretch reads SPMYHSPPSMYPEY. A compositionally biased stretch (polar residues) spans 786–798; it reads NIPSNQGPSSHLS.

The protein belongs to the beta-catenin family. Interacts with apr-1, axl-1, daf-16, lin-23, and pop-1 (via acidic region in N-terminus 1-44). Interacts (via ARM repeats) with pry-1.

It localises to the cytoplasm. It is found in the nucleus. The protein localises to the membrane. Its subcellular location is the cell junction. In terms of biological role, participates in the Wnt signaling pathway which affects cell fate and may regulate the stem cell divisions of seam cells during larval development. Functions as a transcriptional activator but is dependent on the interaction with pop-1. Involved in maintaining lin-39 Hox expression and regulating glr-1 abundance at the synapses. Required for mab-5 expression during Q neuroblast migration and for oxidative stress-induced daf-16 signaling. Has roles in egg laying, vulva precursor cell fate determination, Q neuroblast migration, posterior ectodermal cell P12 specification, movement, body length, male tail development and dauer induction. Functionally redundant to wrm-1 and hmp-2. This is Beta-catenin/armadillo-related protein 1 (bar-1) from Caenorhabditis briggsae.